The primary structure comprises 173 residues: uncharacterized protein (173 aa).

The chain crosses the membrane as a helical span at residues methionine 1–isoleucine 21.

The protein to T.pallidum TP0711.

Its subcellular location is the membrane. This is an uncharacterized protein from Borreliella burgdorferi (strain ATCC 35210 / DSM 4680 / CIP 102532 / B31) (Borrelia burgdorferi).